A 661-amino-acid chain; its full sequence is B3 domain-containing protein Os12g0591400 (661 aa).

DNA-binding regions (TF-B3) lie at residues 2 to 95, 197 to 290, 437 to 535, and 562 to 658; these read GDQK…FNPS, KTRC…FNPS, LYIT…FKES, and TNLT…IRKG.

It localises to the nucleus. The chain is B3 domain-containing protein Os12g0591400 from Oryza sativa subsp. japonica (Rice).